The sequence spans 475 residues: Trifunctional enzyme subunit beta, mitochondrial (475 aa).

A mitochondrion-targeting transit peptide spans 1–34; sequence MTTILTCPFKKLPTTSKWALRFAIRPLSCSSQLR. Residue Lys73 is modified to N6-acetyllysine; alternate. Lys73 carries the N6-succinyllysine; alternate modification. Cys139 serves as the catalytic Acyl-thioester intermediate. An intramembrane segment occupies 174 to 221; that stretch reads IRHSRKMRKLMLDLNKAKSMGQRLSLISKFRLNFLAPELPAVAEFSTS. The residue at position 189 (Lys189) is an N6-acetyllysine; alternate. Lys189 is modified (N6-succinyllysine; alternate). An N6-succinyllysine mark is found at Lys191, Lys273, and Lys292. Position 294 is an N6-acetyllysine; alternate (Lys294). N6-succinyllysine; alternate is present on Lys294. The residue at position 299 (Lys299) is an N6-acetyllysine. Lys333 bears the N6-acetyllysine; alternate mark. Lys333 bears the N6-succinyllysine; alternate mark. N6-acetyllysine is present on residues Lys349 and Lys362. The Proton donor/acceptor role is filled by Cys459.

The protein belongs to the thiolase-like superfamily. Thiolase family. In terms of assembly, heterotetramer of 2 alpha/HADHA and 2 beta/HADHB subunits; forms the mitochondrial trifunctional enzyme. Also purified as higher order heterooligomers including a 4 alpha/HADHA and 4 beta/HADHB heterooligomer which physiological significance remains unclear. The mitochondrial trifunctional enzyme interacts with MTLN. Interacts with RSAD2/viperin.

Its subcellular location is the mitochondrion. It is found in the mitochondrion inner membrane. The protein localises to the mitochondrion outer membrane. It localises to the endoplasmic reticulum. The catalysed reaction is an acyl-CoA + acetyl-CoA = a 3-oxoacyl-CoA + CoA. The enzyme catalyses butanoyl-CoA + acetyl-CoA = 3-oxohexanoyl-CoA + CoA. It carries out the reaction hexanoyl-CoA + acetyl-CoA = 3-oxooctanoyl-CoA + CoA. It catalyses the reaction octanoyl-CoA + acetyl-CoA = 3-oxodecanoyl-CoA + CoA. The catalysed reaction is decanoyl-CoA + acetyl-CoA = 3-oxododecanoyl-CoA + CoA. The enzyme catalyses dodecanoyl-CoA + acetyl-CoA = 3-oxotetradecanoyl-CoA + CoA. It carries out the reaction tetradecanoyl-CoA + acetyl-CoA = 3-oxohexadecanoyl-CoA + CoA. Its pathway is lipid metabolism; fatty acid beta-oxidation. Its function is as follows. Mitochondrial trifunctional enzyme catalyzes the last three of the four reactions of the mitochondrial beta-oxidation pathway. The mitochondrial beta-oxidation pathway is the major energy-producing process in tissues and is performed through four consecutive reactions breaking down fatty acids into acetyl-CoA. Among the enzymes involved in this pathway, the trifunctional enzyme exhibits specificity for long-chain fatty acids. Mitochondrial trifunctional enzyme is a heterotetrameric complex composed of two proteins, the trifunctional enzyme subunit alpha/HADHA carries the 2,3-enoyl-CoA hydratase and the 3-hydroxyacyl-CoA dehydrogenase activities, while the trifunctional enzyme subunit beta/HADHB described here bears the 3-ketoacyl-CoA thiolase activity. The sequence is that of Trifunctional enzyme subunit beta, mitochondrial (HADHB) from Macaca fascicularis (Crab-eating macaque).